The primary structure comprises 437 residues: CMP-5'-(3-aminopropyl)phosphonate hydroxylase (437 aa).

It depends on FAD as a cofactor.

It carries out the reaction CMP-5'-(3-aminopropyl)phosphonate + NADPH + O2 = CMP-5'-(N-hydroxy-3-aminopropyl)phosphonate + NADP(+) + H2O. It participates in antibiotic biosynthesis. Its function is as follows. Hydroxylase involved in the biosynthesis of the phosphonate antibiotic FR-900098, a potent antimalarial agent that acts as an inhibitor of 1-deoxy-D-xylulose 5-phosphate reductoisomerase (DXR), the first enzyme in the nonmevalonate pathway for isoprenoid biosynthesis. Catalyzes the N-hydroxylation of CMP-5'-3-aminopropylphosphonate (CMP-5'-3APn) to CMP-5'-(N-hydroxy-3-aminopropyl)phosphonate (CMP-5'-H3APn). Cannot use CMP-5'-N-acetyl-3-aminopropylphosphonate (CMP-5'-Ac3APn) as a substrate. The chain is CMP-5'-(3-aminopropyl)phosphonate hydroxylase from Streptomyces rubellomurinus (strain ATCC 31215).